The sequence spans 254 residues: Alcohol dehydrogenase (254 aa).

An NAD(+)-binding site is contributed by 10–33 (FVAGLGGIGLDTSREIVKSGPKNL). S138 lines the substrate pocket. Y151 functions as the Proton acceptor in the catalytic mechanism.

It belongs to the short-chain dehydrogenases/reductases (SDR) family. Homodimer.

The catalysed reaction is a primary alcohol + NAD(+) = an aldehyde + NADH + H(+). It carries out the reaction a secondary alcohol + NAD(+) = a ketone + NADH + H(+). The chain is Alcohol dehydrogenase (Adh) from Drosophila adiastola (Fruit fly).